A 329-amino-acid chain; its full sequence is Glycerol-3-phosphate dehydrogenase [NAD(P)+] (329 aa).

NADPH is bound by residues tryptophan 11 and lysine 101. Positions 101, 132, and 134 each coordinate sn-glycerol 3-phosphate. An NADPH-binding site is contributed by alanine 136. 5 residues coordinate sn-glycerol 3-phosphate: lysine 188, aspartate 241, serine 251, arginine 252, and asparagine 253. Lysine 188 functions as the Proton acceptor in the catalytic mechanism. NADPH is bound at residue arginine 252. Glutamate 278 provides a ligand contact to NADPH.

Belongs to the NAD-dependent glycerol-3-phosphate dehydrogenase family.

The protein resides in the cytoplasm. The enzyme catalyses sn-glycerol 3-phosphate + NAD(+) = dihydroxyacetone phosphate + NADH + H(+). It carries out the reaction sn-glycerol 3-phosphate + NADP(+) = dihydroxyacetone phosphate + NADPH + H(+). The protein operates within membrane lipid metabolism; glycerophospholipid metabolism. Its function is as follows. Catalyzes the reduction of the glycolytic intermediate dihydroxyacetone phosphate (DHAP) to sn-glycerol 3-phosphate (G3P), the key precursor for phospholipid synthesis. This Onion yellows phytoplasma (strain OY-M) protein is Glycerol-3-phosphate dehydrogenase [NAD(P)+].